The chain runs to 266 residues: MIVPKISERFEHCRARQRCALIPFLTAGDPDLETTVAALKILDDHGADLIELGMPYSDPLADGPVIQAAATRALQRGTRLEAVLEMTTDLHQQLTAPLILFSYYNPIYHRGVSSFLKAVAQAGIKGLVIPDLPLEEAEPVLAETANLGLELTLLIAPTTSPERMRAIATASQGFIYLVSTTGVTGMRQEMASRVQELLHTLRQITPKPIGVGFGIASPEHARQVRDWGADAAIVGSAFVKRLAEPDQGLAAVAEFCQSLRTALDTP.

Active-site proton acceptor residues include E51 and D62.

It belongs to the TrpA family. Tetramer of two alpha and two beta chains.

It catalyses the reaction (1S,2R)-1-C-(indol-3-yl)glycerol 3-phosphate + L-serine = D-glyceraldehyde 3-phosphate + L-tryptophan + H2O. Its pathway is amino-acid biosynthesis; L-tryptophan biosynthesis; L-tryptophan from chorismate: step 5/5. In terms of biological role, the alpha subunit is responsible for the aldol cleavage of indoleglycerol phosphate to indole and glyceraldehyde 3-phosphate. This is Tryptophan synthase alpha chain from Thermosynechococcus vestitus (strain NIES-2133 / IAM M-273 / BP-1).